The primary structure comprises 695 residues: Spermidine/spermine N(1)-acetyltransferase-like protein 1 (695 aa).

Composition is skewed to polar residues over residues 1–39 (MNQSGTNQSSLSDSNQAGINQPSTNSLGMNQMDMNQGSA), 52–68 (PSMSQAGMRQSGTNLPD), and 78–98 (DTWQLGRSQPGMLQQELSQLV). 4 disordered regions span residues 1-274 (MNQS…MNQM), 290-332 (DMKQ…PGMW), 344-375 (ASISQPGPPQRAPSQSGPRQSSTSQAGTNQSG), and 387-493 (RQSG…GLSQ). The segment covering 105–122 (SQPDPSQPGPSQSGPSQS) has biased composition (low complexity). Composition is skewed to polar residues over residues 123–179 (RMRQ…TGLS), 197–208 (GVQQPGISQQVP), 231–266 (PDTSQSCKNQTDMSQPDANQSSLSDSNQTGIIQPSP), 294–310 (PSMSQAGMRQSGTNLPD), 355–375 (APSQSGPRQSSTSQAGTNQSG), 389–422 (SGGSQPSMRQVGTSQSGTSQIGMSQPGTWQTGLS), and 459–471 (PGTSQSSKNQTGM). Residues 529-695 (FQIRHAEAGD…EELLDMAWEE (167 aa)) form the N-acetyltransferase domain. 552 to 553 (CE) contacts substrate. Residues 618 to 620 (FYV) and 626 to 631 (GLGIGA) each bind acetyl-CoA. Substrate contacts are provided by residues 650–652 (HFL) and E676.

The protein belongs to the acetyltransferase family.

In Homo sapiens (Human), this protein is Spermidine/spermine N(1)-acetyltransferase-like protein 1 (SATL1).